The sequence spans 225 residues: Thymidylate kinase (225 aa).

9–16 lines the ATP pocket; sequence GIEGCGKT.

The protein belongs to the thymidylate kinase family.

The enzyme catalyses dTMP + ATP = dTDP + ADP. Its function is as follows. Phosphorylation of dTMP to form dTDP in both de novo and salvage pathways of dTTP synthesis. This Citrifermentans bemidjiense (strain ATCC BAA-1014 / DSM 16622 / JCM 12645 / Bem) (Geobacter bemidjiensis) protein is Thymidylate kinase.